Here is a 193-residue protein sequence, read N- to C-terminus: Protein hunchback (193 aa).

2 disordered regions span residues 16-126 and 146-193; these read SHHH…ATTT and SNDK…KYMA. Residues 17–31 are compositionally biased toward basic residues; the sequence is HHHHHHHAHHSHHQH. 2 stretches are compositionally biased toward low complexity: residues 35–46 and 56–77; these read SNSNSNASSPHQ and SSNNLQLEQYLKQQQQQQQQQQ. Residues 89–99 show a composition bias toward polar residues; it reads PSPSNNDQNSR. Residues 174–193 show a composition bias toward basic and acidic residues; the sequence is EPEKEHDLMSNSSEDMKYMA.

It belongs to the hunchback C2H2-type zinc-finger protein family.

It localises to the nucleus. Its function is as follows. Gap class segmentation protein that controls development of head structures. The chain is Protein hunchback (hb) from Drosophila iki (Fruit fly).